The primary structure comprises 246 residues: Mast cell protease 1 (246 aa).

A signal peptide spans 1–18 (MQALLFLMALLLPSGAGA). Positions 19-20 (EE) are cleaved as a propeptide — activation peptide. Residues 21–244 (IIGGVEARPH…YVPWIKTVIN (224 aa)) form the Peptidase S1 domain. An intrachain disulfide couples C50 to C66. H65 acts as the Charge relay system in catalysis. An N-linked (GlcNAc...) asparagine glycan is attached at N102. Residue D109 is the Charge relay system of the active site. Cystine bridges form between C143–C208 and C174–C187. The Charge relay system role is filled by S202.

This sequence belongs to the peptidase S1 family. Granzyme subfamily. In terms of tissue distribution, mucosal mast cells.

The protein resides in the secreted. It is found in the cytoplasmic granule. Has a chymotrypsin-like activity. The protein is Mast cell protease 1 (Mcpt1) of Mus musculus (Mouse).